Here is a 2245-residue protein sequence, read N- to C-terminus: Myosin-J heavy chain (2245 aa).

The 53-residue stretch at 25 to 77 folds into the Myosin N-terminal SH3-like domain; it reads QEGAGVWIPDQELGWIGADVIEHSETSADQVLVRTEDDREVKIPLSKVFQKNP. The region spanning 81–821 is the Myosin motor domain; the sequence is EGVDDLSFLS…QLASLEDMRL (741 aa). 174 to 181 contributes to the ATP binding site; sequence GESGAGKT. Positions 646-672 are disordered; the sequence is FTQSPGGHPQGNGGPTSSNTKGTSGSS. A compositionally biased stretch (low complexity) spans 660 to 672; the sequence is PTSSNTKGTSGSS. The tract at residues 669 to 749 is actin-binding; it reads SGSSSMKFLS…GFPTRRLLSE (81 aa). 3 consecutive IQ domains span residues 824–851, 872–901, and 943–972; these read LDRS…RDAS, RTHS…ASLQ, and KLRG…EARS. Residues 973 to 1812 adopt a coiled-coil conformation; it reads LRTVQEQKNK…NYHMLEDRME (840 aa). The disordered stretch occupies residues 1504–1524; the sequence is KKQLTQLQQQHEQSSTQLLLA. Over residues 1506–1523 the composition is skewed to low complexity; sequence QLTQLQQQHEQSSTQLLL. The Dilute domain occupies 1969 to 2188; that stretch reads IDFIDQLQQS…IASICPPNKS (220 aa).

Belongs to the TRAFAC class myosin-kinesin ATPase superfamily. Myosin family. Homodimer that associates with six light chains.

Its subcellular location is the contractile vacuole. Processive motor protein that can move over long distances along F-actin without disassociating; processiveness depends on high physiological Mg(2+) concentrations. Presents a high actin affinity in the presence of ADP, fast ATP hydrolysis, and a high steady-state ATPase activity in the presence of actin that is rate limited by ADP release. Physiological decrease of free Mg(2+) ions leads to an increased rate of ADP release and shortening of the fraction of time it spends in the strong acting binding states. In Dictyostelium discoideum (Social amoeba), this protein is Myosin-J heavy chain (myoJ).